The chain runs to 250 residues: Ribosomal RNA small subunit methyltransferase J (250 aa).

Residues 96-97 (RD) and aspartate 168 each bind S-adenosyl-L-methionine.

The protein belongs to the methyltransferase superfamily. RsmJ family.

It is found in the cytoplasm. It catalyses the reaction guanosine(1516) in 16S rRNA + S-adenosyl-L-methionine = N(2)-methylguanosine(1516) in 16S rRNA + S-adenosyl-L-homocysteine + H(+). In terms of biological role, specifically methylates the guanosine in position 1516 of 16S rRNA. The protein is Ribosomal RNA small subunit methyltransferase J of Neisseria gonorrhoeae (strain NCCP11945).